The following is a 429-amino-acid chain: Serine hydroxymethyltransferase (429 aa).

(6S)-5,6,7,8-tetrahydrofolate-binding positions include L126 and 130-132 (GHL). Position 235 is an N6-(pyridoxal phosphate)lysine (K235). Residue 359-361 (SPF) participates in (6S)-5,6,7,8-tetrahydrofolate binding.

It belongs to the SHMT family. Homodimer. The cofactor is pyridoxal 5'-phosphate.

The protein localises to the cytoplasm. It carries out the reaction (6R)-5,10-methylene-5,6,7,8-tetrahydrofolate + glycine + H2O = (6S)-5,6,7,8-tetrahydrofolate + L-serine. Its pathway is one-carbon metabolism; tetrahydrofolate interconversion. The protein operates within amino-acid biosynthesis; glycine biosynthesis; glycine from L-serine: step 1/1. In terms of biological role, catalyzes the reversible interconversion of serine and glycine with tetrahydrofolate (THF) serving as the one-carbon carrier. This reaction serves as the major source of one-carbon groups required for the biosynthesis of purines, thymidylate, methionine, and other important biomolecules. Also exhibits THF-independent aldolase activity toward beta-hydroxyamino acids, producing glycine and aldehydes, via a retro-aldol mechanism. The polypeptide is Serine hydroxymethyltransferase (Synechococcus sp. (strain CC9311)).